We begin with the raw amino-acid sequence, 107 residues long: Nucleoid-associated protein A1I_00660 (107 aa).

Residues 81–107 are disordered; the sequence is KCDSDSQNSMSGALSGMSLPPGFKMPF.

This sequence belongs to the YbaB/EbfC family. As to quaternary structure, homodimer.

Its subcellular location is the cytoplasm. The protein localises to the nucleoid. In terms of biological role, binds to DNA and alters its conformation. May be involved in regulation of gene expression, nucleoid organization and DNA protection. The polypeptide is Nucleoid-associated protein A1I_00660 (Rickettsia bellii (strain OSU 85-389)).